The primary structure comprises 197 residues: Wadjet protein JetB (197 aa).

Functionally, component of antiplasmid transformation system Wadjet type I, composed of JetA, JetB, JetC and JetD. Expression of Wadjet type I in B.subtilis (strain BEST7003) reduces the transformation efficiency of plasmid pHCMC05. The chain is Wadjet protein JetB from Bacillus cereus (strain Q1).